The following is a 696-amino-acid chain: MSKRNPLERYRNIGIMAHIDAGKTTTSERILFYTGVSHKLGEVHDGAATMDWMEQEQERGITITSAATTCFWKGMAGNYPEHRINVIDTPGHVDFTIEVERSLRVLDGACTVFCSVGGVQPQTETVWRQANKYGVPRLAFVNKMDRSGANFMRVREQMISRLKANPVPIQLPIGAEDKFAGIIDLVKMKAVYWDDASQGTKFEEREIPASQQADAATWREKMIESAAEASEELMNKYLEAGDLAVEDIKQGLRARTINNEIVPMLCGTAFKNKGVQAMLDAVLDYLPSPLDVPAIKGVDENGLEDERGPSEDSPFAALAFKIATDPYVGQLIFFRVYSGTVKSGDTVFNPVKGKRERIGRLLQMHANQREEIKEVGTGDIAAAVGLKEVTTGDTLCDPNHVITLERMDFPEPVIHVAVEPKTKIDQEKMGIALNRLAQEDPSFRVRTDEESGQTIISGMGELHLEIIVDRMKREFGVEANVGAPQVAYREAIRKQVEIEGKFVKQSGGRGQYGHVWLRMEPNEAGKGFEFVDEIKGGAVPREYIPAVEKGLRDSLSNGVLAGYPVVDVKIALFDGSYHDVDSNENAFKMAASIAFKDGMKKASPVLLEPMMAVEVETPSEFMGNVVGDLSSRRGIIQGMEDIPGFKVIRSEVPLAEMFGYSTILRSATQGRATYSMEFKHYSEAPKNVAEAIISKK.

Residues 8–290 enclose the tr-type G domain; that stretch reads ERYRNIGIMA…AVLDYLPSPL (283 aa). Residues 17 to 24, 88 to 92, and 142 to 145 contribute to the GTP site; these read AHIDAGKT, DTPGH, and NKMD.

It belongs to the TRAFAC class translation factor GTPase superfamily. Classic translation factor GTPase family. EF-G/EF-2 subfamily.

The protein localises to the cytoplasm. In terms of biological role, catalyzes the GTP-dependent ribosomal translocation step during translation elongation. During this step, the ribosome changes from the pre-translocational (PRE) to the post-translocational (POST) state as the newly formed A-site-bound peptidyl-tRNA and P-site-bound deacylated tRNA move to the P and E sites, respectively. Catalyzes the coordinated movement of the two tRNA molecules, the mRNA and conformational changes in the ribosome. The chain is Elongation factor G from Nitrosomonas eutropha (strain DSM 101675 / C91 / Nm57).